The following is a 521-amino-acid chain: Bifunctional purine biosynthesis protein PurH (521 aa).

An MGS-like domain is found at 1–145 (MIKQALISVS…KNHRDVTVVV (145 aa)).

It belongs to the PurH family.

It carries out the reaction (6R)-10-formyltetrahydrofolate + 5-amino-1-(5-phospho-beta-D-ribosyl)imidazole-4-carboxamide = 5-formamido-1-(5-phospho-D-ribosyl)imidazole-4-carboxamide + (6S)-5,6,7,8-tetrahydrofolate. The enzyme catalyses IMP + H2O = 5-formamido-1-(5-phospho-D-ribosyl)imidazole-4-carboxamide. It functions in the pathway purine metabolism; IMP biosynthesis via de novo pathway; 5-formamido-1-(5-phospho-D-ribosyl)imidazole-4-carboxamide from 5-amino-1-(5-phospho-D-ribosyl)imidazole-4-carboxamide (10-formyl THF route): step 1/1. The protein operates within purine metabolism; IMP biosynthesis via de novo pathway; IMP from 5-formamido-1-(5-phospho-D-ribosyl)imidazole-4-carboxamide: step 1/1. In Paraburkholderia phytofirmans (strain DSM 17436 / LMG 22146 / PsJN) (Burkholderia phytofirmans), this protein is Bifunctional purine biosynthesis protein PurH.